The chain runs to 299 residues: Fibrinogen silencer-binding protein (299 aa).

Lys94 is covalently cross-linked (Glycyl lysine isopeptide (Lys-Gly) (interchain with G-Cter in SUMO2)).

In terms of assembly, interacts with APBA1 (via PDZ 1 and 2 domains). In terms of tissue distribution, expressed in multiple tissues including brain.

The protein resides in the nucleus. Functionally, transcriptional repressor that down-regulates the expression of the fibrinogen gamma chain. Represses transcription of GSK3B gene promoter via its interaction with APBA1. In Homo sapiens (Human), this protein is Fibrinogen silencer-binding protein (FSBP).